The sequence spans 275 residues: PE family protein PE8 (275 aa).

In terms of domain architecture, PE spans 5 to 93 (KTVPEELTAA…AGTYGVTESL (89 aa)).

Belongs to the mycobacterial PE family. Forms a heterodimer with PPE15. The dimer forms a 1:1:1 heterotrimeric complex with EspG5.

The protein localises to the secreted. Its subcellular location is the cell wall. In terms of biological role, promotes the intracellular survival of recombinant Mycobacterium within macrophages by regulating host inflammatory cytokines production and inhibiting cell late apoptosis. In Mycobacterium tuberculosis (strain ATCC 25618 / H37Rv), this protein is PE family protein PE8.